Here is a 264-residue protein sequence, read N- to C-terminus: Thymidylate synthase (264 aa).

DUMP is bound at residue Arg21. Residue His51 coordinates (6R)-5,10-methylene-5,6,7,8-tetrahydrofolate. 126-127 (RR) serves as a coordination point for dUMP. Residue Cys146 is the Nucleophile of the active site. DUMP contacts are provided by residues 166–169 (RSAD), Asn177, and 207–209 (HIY). Asp169 contributes to the (6R)-5,10-methylene-5,6,7,8-tetrahydrofolate binding site. Ala263 provides a ligand contact to (6R)-5,10-methylene-5,6,7,8-tetrahydrofolate.

It belongs to the thymidylate synthase family. Bacterial-type ThyA subfamily. Homodimer.

It localises to the cytoplasm. It carries out the reaction dUMP + (6R)-5,10-methylene-5,6,7,8-tetrahydrofolate = 7,8-dihydrofolate + dTMP. It participates in pyrimidine metabolism; dTTP biosynthesis. Catalyzes the reductive methylation of 2'-deoxyuridine-5'-monophosphate (dUMP) to 2'-deoxythymidine-5'-monophosphate (dTMP) while utilizing 5,10-methylenetetrahydrofolate (mTHF) as the methyl donor and reductant in the reaction, yielding dihydrofolate (DHF) as a by-product. This enzymatic reaction provides an intracellular de novo source of dTMP, an essential precursor for DNA biosynthesis. The polypeptide is Thymidylate synthase (Ruminiclostridium cellulolyticum (strain ATCC 35319 / DSM 5812 / JCM 6584 / H10) (Clostridium cellulolyticum)).